A 602-amino-acid polypeptide reads, in one-letter code: Potassium-transporting ATPase potassium-binding subunit (602 aa).

A run of 10 helical transmembrane segments spans residues 3 to 23 (ANNL…AVPV), 64 to 84 (QYAL…YALL), 135 to 155 (GLTV…LALI), 178 to 198 (LYVL…QGVI), 282 to 302 (FSNF…CLVF), 313 to 333 (VAVL…ETSA), 418 to 438 (GLYG…LMIG), 456 to 476 (VSIV…IAVL), 522 to 542 (WMTA…VLAI), and 565 to 585 (LFVV…YMPA).

The protein belongs to the KdpA family. The system is composed of three essential subunits: KdpA, KdpB and KdpC.

It is found in the cell inner membrane. Functionally, part of the high-affinity ATP-driven potassium transport (or Kdp) system, which catalyzes the hydrolysis of ATP coupled with the electrogenic transport of potassium into the cytoplasm. This subunit binds the periplasmic potassium ions and delivers the ions to the membrane domain of KdpB through an intramembrane tunnel. This Burkholderia pseudomallei (strain K96243) protein is Potassium-transporting ATPase potassium-binding subunit.